The primary structure comprises 106 residues: Nucleoid-associated protein RPD_0086 (106 aa).

It belongs to the YbaB/EbfC family. Homodimer.

The protein resides in the cytoplasm. It localises to the nucleoid. In terms of biological role, binds to DNA and alters its conformation. May be involved in regulation of gene expression, nucleoid organization and DNA protection. The chain is Nucleoid-associated protein RPD_0086 from Rhodopseudomonas palustris (strain BisB5).